Here is a 209-residue protein sequence, read N- to C-terminus: Large ribosomal subunit protein uL3 (209 aa).

Positions 128-152 (QARGPMSHGSRYHRRPGSMGPVDPN) are disordered.

It belongs to the universal ribosomal protein uL3 family. Part of the 50S ribosomal subunit. Forms a cluster with proteins L14 and L19.

Functionally, one of the primary rRNA binding proteins, it binds directly near the 3'-end of the 23S rRNA, where it nucleates assembly of the 50S subunit. This is Large ribosomal subunit protein uL3 from Halalkalibacterium halodurans (strain ATCC BAA-125 / DSM 18197 / FERM 7344 / JCM 9153 / C-125) (Bacillus halodurans).